A 343-amino-acid polypeptide reads, in one-letter code: Anthranilate phosphoribosyltransferase (343 aa).

5-phospho-alpha-D-ribose 1-diphosphate is bound by residues Gly-84, 87-88, Thr-92, 94-97, 112-120, and Ser-124; these read GD, NIST, and KHGNRSASS. Gly-84 lines the anthranilate pocket. Residue Ser-96 participates in Mg(2+) binding. Asn-115 lines the anthranilate pocket. Arg-170 lines the anthranilate pocket. Mg(2+) is bound by residues Asp-229 and Glu-230.

It belongs to the anthranilate phosphoribosyltransferase family. In terms of assembly, homodimer. Mg(2+) is required as a cofactor.

The catalysed reaction is N-(5-phospho-beta-D-ribosyl)anthranilate + diphosphate = 5-phospho-alpha-D-ribose 1-diphosphate + anthranilate. The protein operates within amino-acid biosynthesis; L-tryptophan biosynthesis; L-tryptophan from chorismate: step 2/5. Catalyzes the transfer of the phosphoribosyl group of 5-phosphorylribose-1-pyrophosphate (PRPP) to anthranilate to yield N-(5'-phosphoribosyl)-anthranilate (PRA). The chain is Anthranilate phosphoribosyltransferase from Bordetella pertussis (strain Tohama I / ATCC BAA-589 / NCTC 13251).